Consider the following 638-residue polypeptide: Meiosis initiator protein (638 aa).

Disordered regions lie at residues 1 to 21 (MFGS…SLGP), 60 to 79 (NQRN…KNHT), 138 to 249 (LAGL…KGGQ), 404 to 433 (PSAY…SLHR), and 447 to 537 (GNSK…PCPP). Polar residues predominate over residues 7-20 (YLGSSEQPRANSLG). Residues 62-75 (RNQNKLLSPNKKQR) form a basic motif; degenerate region. One can recognise a bHLH domain in the interval 62 to 116 (RNQNKLLSPNKKQRKNHTSKLQELALLLPIALKTGTKKLTKKEILVHVLQYIQYL). The interval 76-116 (KNHTSKLQELALLLPIALKTGTKKLTKKEILVHVLQYIQYL) is helix-loop-helix motif. Over residues 157–167 (TPSSSPSSQKS) the composition is skewed to low complexity. A compositionally biased stretch (polar residues) spans 182–191 (TQASESQTRT). Residues 412–430 (PQEKDTASKAPKDPPESHS) are compositionally biased toward basic and acidic residues. Over residues 453–465 (SSSSSSSSSSSSS) the composition is skewed to low complexity. Residues 528 to 537 (KEKKKGPCPP) show a composition bias toward basic residues. Residues 540–608 (KKKCVNGFIM…QHNRIVKQDG (69 aa)) constitute a DNA-binding region (HMG box).

In terms of assembly, interacts with STRA8.

It is found in the nucleus. In terms of biological role, gatekeeper of meiotic initiation in both male and female germ cells. In complex with STRA8, directly activates the transcription of a subset of critical meiotic genes playing a central role in cell-cycle switching from mitosis to meiosis. Temporal expression of MEIOSIN is required for meiotic entry decision. This chain is Meiosis initiator protein, found in Homo sapiens (Human).